The sequence spans 179 residues: Protein GrpE (179 aa).

Residues 1–14 are compositionally biased toward basic and acidic residues; that stretch reads MSKKDKKEEIKEEV. Residues 1–40 form a disordered region; the sequence is MSKKDKKEEIKEEVEATEPTTEESVEEVAEETSENKELQE. The span at 15-32 shows a compositional bias: acidic residues; that stretch reads EATEPTTEESVEEVAEET.

This sequence belongs to the GrpE family. As to quaternary structure, homodimer.

It is found in the cytoplasm. Its function is as follows. Participates actively in the response to hyperosmotic and heat shock by preventing the aggregation of stress-denatured proteins, in association with DnaK and GrpE. It is the nucleotide exchange factor for DnaK and may function as a thermosensor. Unfolded proteins bind initially to DnaJ; upon interaction with the DnaJ-bound protein, DnaK hydrolyzes its bound ATP, resulting in the formation of a stable complex. GrpE releases ADP from DnaK; ATP binding to DnaK triggers the release of the substrate protein, thus completing the reaction cycle. Several rounds of ATP-dependent interactions between DnaJ, DnaK and GrpE are required for fully efficient folding. The chain is Protein GrpE from Streptococcus mutans serotype c (strain ATCC 700610 / UA159).